A 490-amino-acid chain; its full sequence is GTPase Der (490 aa).

2 EngA-type G domains span residues P3–D166 and I196–V369. Residues G9 to S16, D56 to I60, and N118 to D121 contribute to the GTP site. The interval F162–G189 is disordered. A compositionally biased stretch (acidic residues) spans R164 to G181. Residues G202–S209, D249–V253, and N314–D317 each bind GTP. Residues T370 to E454 form the KH-like domain. The interval G453–K490 is disordered. Residues N470–K490 are compositionally biased toward basic residues.

It belongs to the TRAFAC class TrmE-Era-EngA-EngB-Septin-like GTPase superfamily. EngA (Der) GTPase family. Associates with the 50S ribosomal subunit.

In terms of biological role, GTPase that plays an essential role in the late steps of ribosome biogenesis. This is GTPase Der from Pseudomonas fluorescens (strain Pf0-1).